We begin with the raw amino-acid sequence, 199 residues long: LIM domain-containing protein WLIM2b (199 aa).

2 LIM zinc-binding domains span residues 8–68 (QKCK…LFKE) and 106–166 (EKCA…LFKE).

As to quaternary structure, interacts with F-actin. As to expression, expressed in roots, leaves, stems, flowers and siliques. Barely detected in pollen.

The protein resides in the cytoplasm. Its subcellular location is the cytoskeleton. In terms of biological role, binds to actin filaments and promotes cross-linking into thick bundles. Has an actin-stabilizing activity. The actin regulatory activities are not regulated by pH and [Ca(2+)]. The sequence is that of LIM domain-containing protein WLIM2b from Arabidopsis thaliana (Mouse-ear cress).